The chain runs to 274 residues: tRNA-cytidine(32) 2-sulfurtransferase (274 aa).

The PP-loop motif motif lies at 40–45 (SGGKDS). 3 residues coordinate [4Fe-4S] cluster: C115, C118, and C206.

This sequence belongs to the TtcA family. Homodimer. Mg(2+) is required as a cofactor. [4Fe-4S] cluster serves as cofactor.

It localises to the cytoplasm. It carries out the reaction cytidine(32) in tRNA + S-sulfanyl-L-cysteinyl-[cysteine desulfurase] + AH2 + ATP = 2-thiocytidine(32) in tRNA + L-cysteinyl-[cysteine desulfurase] + A + AMP + diphosphate + H(+). It participates in tRNA modification. Functionally, catalyzes the ATP-dependent 2-thiolation of cytidine in position 32 of tRNA, to form 2-thiocytidine (s(2)C32). The sulfur atoms are provided by the cysteine/cysteine desulfurase (IscS) system. The polypeptide is tRNA-cytidine(32) 2-sulfurtransferase (Ectopseudomonas mendocina (strain ymp) (Pseudomonas mendocina)).